A 361-amino-acid polypeptide reads, in one-letter code: Free fatty acid receptor 4 (361 aa).

The segment at 1 to 21 (MSPECAQTTGPGPSRTPDQVN) is disordered. Over 1 to 45 (MSPECAQTTGPGPSRTPDQVNRTHFPFFSDVKGDHRLVLSVLETT) the chain is Extracellular. N-linked (GlcNAc...) asparagine glycosylation occurs at Asn-21. The chain crosses the membrane as a helical span at residues 46-66 (VLGLIFVVSLLGNVCALVLVV). The Cytoplasmic portion of the chain corresponds to 67-77 (RRRRRGATVSL). A helical transmembrane segment spans residues 78–98 (VLNLFCADLLFTSAIPLVLVV). Residues 99–103 (RWTEA) are Extracellular-facing. The chain crosses the membrane as a helical span at residues 104 to 124 (WLLGPVVCHLLFYVMTMSGSV). An intrachain disulfide couples Cys-111 to Cys-194. The Cytoplasmic portion of the chain corresponds to 125 to 156 (TILTLAAVSLERMVCIVRLRRGLSGPGRRTQA). A helical membrane pass occupies residues 157–177 (ALLAFIWGYSALAALPLCILF). Over 178–204 (RVVPQRLPGGDQEIPICTLDWPNRIGE) the chain is Extracellular. A helical membrane pass occupies residues 205–225 (ISWDVFFVTLNFLVPGLVIVI). Residues 226-268 (SYSKILQITKASRKRLTLSLAYSESHQIRVSQQDYRLFRTLFL) are Cytoplasmic-facing. The helical transmembrane segment at 269-289 (LMVSFFIMWSPIIITILLILI) threads the bilayer. Residues 290–295 (QNFRQD) are Extracellular-facing. The helical transmembrane segment at 296–316 (LVIWPSLFFWVVAFTFANSAL) threads the bilayer. Residues 317 to 361 (NPILYNMSLFRSEWRKIFCCFFFPEKGAIFTETSIRRNDLSVIST) are Cytoplasmic-facing. Thr-347 and Thr-349 each carry phosphothreonine. A phosphoserine mark is found at Ser-350, Ser-357, and Ser-360.

Belongs to the G-protein coupled receptor 1 family. Interacts (via C-terminus) with ARRB2 following LCFAs stimulation. Post-translationally, phosphorylated at two clusters of Ser and Thr residues located in the intracellular C-terminus. Prerequisite for FFAR4 internalization via an ARRB2-dependent pathway.

Its subcellular location is the cell membrane. The protein localises to the endosome membrane. It is found in the lysosome membrane. The protein resides in the cell projection. It localises to the cilium membrane. Functionally, G-protein-coupled receptor for long-chain fatty acids (LCFAs) with a major role in adipogenesis, energy metabolism and inflammation. Signals via G-protein and beta-arrestin pathways. LCFAs sensing initiates activation of phosphoinositidase C-linked G proteins GNAQ and GNA11 (G(q)/G(11)), inducing a variety of cellular responses via second messenger pathways such as intracellular calcium mobilization, modulation of cyclic adenosine monophosphate (cAMP) production, and mitogen-activated protein kinases (MAPKs). After LCFAs binding, associates with beta-arrestin ARRB2 that acts as an adapter protein coupling the receptor to specific downstream signaling pathways, as well as mediating receptor endocytosis. In response to dietary fats, plays an important role in the regulation of adipocyte proliferation and differentiation. Acts as a receptor for omega-3 polyunsaturated fatty acids (PUFAs) at primary cilium of perivascular preadipocytes, initiating an adipogenic program via cAMP and CTCF-dependent chromatin remodeling that ultimately results in transcriptional activation of adipogenic genes and cell cycle entry. Induces differentiation of brown and beige adipocytes probably via autocrine and endocrine functions of FGF21 hormone. Contributes to the thermogenic activation of brown adipose tissue and the browning of white adipose tissue. Activates brown adipocytes by initiating intracellular calcium signaling leading to mitochondrial depolarization and fission, and overall increased mitochondrial respiration. Consequently stimulates fatty acid uptake and oxidation in mitochondria together with UCP1-mediated thermogenic respiration, eventually reducing fat mass. Regulates bi-potential differentiation of bone marrow mesenchymal stem cells toward osteoblasts or adipocytes likely by up-regulating distinct integrins. In response to dietary fats regulates hormone secretion and appetite. Stimulates GIP and GLP1 secretion from enteroendocrine cells as well as GCG secretion in pancreatic alpha cells, thereby playing a role in the regulation of blood glucose levels. Negatively regulates glucose-induced SST secretion in pancreatic delta cells. Mediates LCFAs inhibition of GHRL secretion, an appetite-controlling hormone. In taste buds, contributes to sensing of dietary fatty acids by the gustatory system. During the inflammatory response, promotes anti-inflammatory M2 macrophage differentiation in adipose tissue. Mediates the anti-inflammatory effects of omega-3 PUFAs via inhibition of NLRP3 inflammasome activation. In this pathway, interacts with adapter protein ARRB2 and inhibits the priming step triggered by Toll-like receptors (TLRs) at the level of TAK1 and TAB1. Further inhibits the activation step when ARRB2 directly associates with NLRP3, leading to inhibition of pro-inflammatory cytokine release. Mediates LCFAs anti-apoptotic effects. In Rattus norvegicus (Rat), this protein is Free fatty acid receptor 4 (Ffar4).